Here is a 608-residue protein sequence, read N- to C-terminus: uncharacterized protein (608 aa).

Residues 4 to 24 form a helical membrane-spanning segment; the sequence is LIFMALLMSLLFIGTVFGYGD.

This sequence to M.jannaschii MJ1394 and A.fulgidus AF2028.

Its subcellular location is the membrane. This is an uncharacterized protein from Methanocaldococcus jannaschii (strain ATCC 43067 / DSM 2661 / JAL-1 / JCM 10045 / NBRC 100440) (Methanococcus jannaschii).